The chain runs to 197 residues: 22.7 kDa class IV heat shock protein (197 aa).

Positions 1 to 28 are cleaved as a signal peptide; it reads MSLKPLNMLLVPFLLLILAADFPLKAKA. In terms of domain architecture, sHSP spans 68 to 184; that stretch reads PSITLSHARV…GPRMVSIVEE (117 aa). A Prevents secretion from ER motif is present at residues 194–197; sequence DELK.

The protein belongs to the small heat shock protein (HSP20) family. In terms of assembly, forms oligomeric structures.

Its subcellular location is the endoplasmic reticulum lumen. The protein is 22.7 kDa class IV heat shock protein (HSP22.7) of Pisum sativum (Garden pea).